Consider the following 157-residue polypeptide: Transcriptional repressor NrdR (157 aa).

A zinc finger lies at 3-34; it reads CPSCQNTDSRVLESRSADAGKCVRRRRECLNC. Positions 49 to 139 constitute an ATP-cone domain; the sequence is VTVIKRSNAK…VYRQFNGIED (91 aa).

This sequence belongs to the NrdR family. Zn(2+) serves as cofactor.

In terms of biological role, negatively regulates transcription of bacterial ribonucleotide reductase nrd genes and operons by binding to NrdR-boxes. The polypeptide is Transcriptional repressor NrdR (Prochlorococcus marinus (strain SARG / CCMP1375 / SS120)).